The following is a 342-amino-acid chain: N-acetyl-gamma-glutamyl-phosphate reductase (342 aa).

Residue cysteine 147 is part of the active site.

This sequence belongs to the NAGSA dehydrogenase family. Type 1 subfamily.

It is found in the cytoplasm. It catalyses the reaction N-acetyl-L-glutamate 5-semialdehyde + phosphate + NADP(+) = N-acetyl-L-glutamyl 5-phosphate + NADPH + H(+). It functions in the pathway amino-acid biosynthesis; L-arginine biosynthesis; N(2)-acetyl-L-ornithine from L-glutamate: step 3/4. In terms of biological role, catalyzes the NADPH-dependent reduction of N-acetyl-5-glutamyl phosphate to yield N-acetyl-L-glutamate 5-semialdehyde. This is N-acetyl-gamma-glutamyl-phosphate reductase from Campylobacter jejuni subsp. jejuni serotype O:2 (strain ATCC 700819 / NCTC 11168).